The sequence spans 544 residues: Ribosomal protein S6 kinase-like 1 (544 aa).

In terms of domain architecture, MIT spans 87–115; sequence VHVDPNKERREAVKLKITKYLRRAEEIFN. The 390-residue stretch at 145–534 folds into the Protein kinase domain; that stretch reads SALEQLKGCR…TSRLKSHPFF (390 aa). Residues 151 to 159 and K177 contribute to the ATP site; that span reads KGCRVVGII. 2 disordered regions span residues 262–344 and 353–372; these read PAEL…HWVR and AYGR…SLGS. Residues 303–313 are compositionally biased toward polar residues; that stretch reads SRPSAVFSSDP. The active-site Proton acceptor is the D407.

Belongs to the protein kinase superfamily. Ser/Thr protein kinase family. S6 kinase subfamily.

It carries out the reaction L-seryl-[protein] + ATP = O-phospho-L-seryl-[protein] + ADP + H(+). It catalyses the reaction L-threonyl-[protein] + ATP = O-phospho-L-threonyl-[protein] + ADP + H(+). The sequence is that of Ribosomal protein S6 kinase-like 1 (Rps6kl1) from Mus musculus (Mouse).